The following is a 382-amino-acid chain: 2-heptyl-3-hydroxy-4(1H)-quinolone synthase (382 aa).

It belongs to the 3-hydroxybenzoate 6-hydroxylase family.

It carries out the reaction 2-heptyl-4(1H)-quinolone + NADH + O2 + H(+) = 2-heptyl-3-hydroxy-4(1H)-quinolone + NAD(+) + H2O. In terms of biological role, involved in the terminal step of the biosynthesis of quinolone which in addition to serve as a potent signal for quorum sensing, chelates iron and promotes the formation of membrane vesicles (MVs). Catalyzes the hydroxylation of 2-heptyl-4-quinolone (C7-HHQ) to yield 2-heptyl-3-hydroxy-4-quinolone (PQS). PqsH is also able to hydroxylate HHQ analogs having alkyl side-chain lengths of 3 (C3-HHQ), 5 (C5-HHQ) and 9 (C9-HHQ) carbons, however catalytic efficiencies are significantly reduced for substrates with alkyl side-chain lengths below 7 carbons. This chain is 2-heptyl-3-hydroxy-4(1H)-quinolone synthase (pqsH), found in Pseudomonas aeruginosa (strain UCBPP-PA14).